The chain runs to 729 residues: Fatty acid oxidation complex subunit alpha (729 aa).

An enoyl-CoA hydratase/isomerase region spans residues 1–189 (MLYQSETLQL…KIGLVDAVVD (189 aa)). Asp296 contacts substrate. The tract at residues 311-729 (AAPKLAAVLG…LLDVSTNQPA (419 aa)) is 3-hydroxyacyl-CoA dehydrogenase. Residues Met324, Asp343, 400 to 402 (VVE), Lys407, and Ser429 contribute to the NAD(+) site. His450 functions as the For 3-hydroxyacyl-CoA dehydrogenase activity in the catalytic mechanism. Asn453 contacts NAD(+). Residues Asn500 and Tyr660 each contribute to the substrate site.

In the N-terminal section; belongs to the enoyl-CoA hydratase/isomerase family. It in the C-terminal section; belongs to the 3-hydroxyacyl-CoA dehydrogenase family. In terms of assembly, heterotetramer of two alpha chains (FadB) and two beta chains (FadA).

The enzyme catalyses a (3S)-3-hydroxyacyl-CoA + NAD(+) = a 3-oxoacyl-CoA + NADH + H(+). The catalysed reaction is a (3S)-3-hydroxyacyl-CoA = a (2E)-enoyl-CoA + H2O. It catalyses the reaction a 4-saturated-(3S)-3-hydroxyacyl-CoA = a (3E)-enoyl-CoA + H2O. It carries out the reaction (3S)-3-hydroxybutanoyl-CoA = (3R)-3-hydroxybutanoyl-CoA. The enzyme catalyses a (3Z)-enoyl-CoA = a 4-saturated (2E)-enoyl-CoA. The catalysed reaction is a (3E)-enoyl-CoA = a 4-saturated (2E)-enoyl-CoA. It participates in lipid metabolism; fatty acid beta-oxidation. Its function is as follows. Involved in the aerobic and anaerobic degradation of long-chain fatty acids via beta-oxidation cycle. Catalyzes the formation of 3-oxoacyl-CoA from enoyl-CoA via L-3-hydroxyacyl-CoA. It can also use D-3-hydroxyacyl-CoA and cis-3-enoyl-CoA as substrate. The protein is Fatty acid oxidation complex subunit alpha of Yersinia pseudotuberculosis serotype O:1b (strain IP 31758).